Reading from the N-terminus, the 131-residue chain is Histone H2B.2 (131 aa).

Positions 1–19 are enriched in basic and acidic residues; it reads MSSAAEKKPASKAPAEKKP. Residues 1-37 are disordered; the sequence is MSSAAEKKPASKAPAEKKPAAKKTSTSVDGKKRSKVR. N6-acetyllysine; alternate occurs at positions 7 and 8. Residues Lys-7 and Lys-8 each participate in a glycyl lysine isopeptide (Lys-Gly) (interchain with G-Cter in SUMO); alternate cross-link. The residue at position 11 (Ser-11) is a Phosphoserine. Lys-12 bears the N6-acetyllysine mark. An N6-acetyllysine; alternate mark is found at Lys-17, Lys-18, Lys-22, and Lys-23. Glycyl lysine isopeptide (Lys-Gly) (interchain with G-Cter in SUMO); alternate cross-links involve residues Lys-17 and Lys-18. Lys-22 carries the N6-butyryllysine; alternate modification. At Lys-23 the chain carries N6-methyllysine; alternate. Lys-35 is modified (N6-succinyllysine). Lys-38 carries the N6,N6-dimethyllysine modification. N6-succinyllysine is present on Lys-47. Lys-124 participates in a covalent cross-link: Glycyl lysine isopeptide (Lys-Gly) (interchain with G-Cter in ubiquitin).

The protein belongs to the histone H2B family. In terms of assembly, the nucleosome is a histone octamer containing two molecules each of H2A, H2B, H3 and H4 assembled in one H3-H4 heterotetramer and two H2A-H2B heterodimers. The octamer wraps approximately 147 bp of DNA. Interacts with NAP1. In terms of processing, monoubiquitinated by the RAD6/UBC2-BRE1 complex to form H2BK123ub1. H2BK123ub1 gives a specific tag for epigenetic transcriptional activation and is also prerequisite for H3K4me and H3K79me formation. H2BK123ub1 also modulates the formation of double-strand breaks during meiosis and is a prerequisite for DNA-damage checkpoint activation. Deubiquitination is performed by UBP8 in presence of SGF11. Phosphorylated by STE20 to form H2BS10ph during progression through meiotic prophase. May be correlated with chromosome condensation. H2BS10ph is also formed after H(2)O(2) treatment, and is a step leading to apoptosis. Post-translationally, acetylated by GCN5, a component of the SAGA complex, to form H2BK11ac and H2BK16ac. H2BK16ac can also be formed by ESA1, a component of the NuA4 histone acetyltransferase (HAT) complex. Acetylation of N-terminal lysines and particularly formation of H2BK11acK16ac has a positive effect on transcription. In terms of processing, sumoylation to form H2BK6su or H2BK7su, and probably also H2BK16su or H2BK17su, occurs preferentially near the telomeres and represses gene transcription.

It localises to the nucleus. The protein resides in the chromosome. Functionally, core component of nucleosome. Nucleosomes wrap and compact DNA into chromatin, limiting DNA accessibility to the cellular machineries which require DNA as a template. Histones thereby play a central role in transcription regulation, DNA repair, DNA replication and chromosomal stability. DNA accessibility is regulated via a complex set of post-translational modifications of histones, also called histone code, and nucleosome remodeling. The protein is Histone H2B.2 (HTB2) of Saccharomyces cerevisiae (strain ATCC 204508 / S288c) (Baker's yeast).